Here is a 147-residue protein sequence, read N- to C-terminus: Myoglobin (147 aa).

The Globin domain maps to 2–141; that stretch reads ADFDAVLKCW…VIADLEANYK (140 aa). H60 contacts nitrite. H60 contacts O2. H89 contributes to the heme b binding site.

Belongs to the globin family. As to quaternary structure, monomeric.

Its subcellular location is the cytoplasm. It is found in the sarcoplasm. It catalyses the reaction Fe(III)-heme b-[protein] + nitric oxide + H2O = Fe(II)-heme b-[protein] + nitrite + 2 H(+). The catalysed reaction is H2O2 + AH2 = A + 2 H2O. Its function is as follows. Monomeric heme protein which primary function is to store oxygen and facilitate its diffusion within muscle tissues. Reversibly binds oxygen through a pentacoordinated heme iron and enables its timely and efficient release as needed during periods of heightened demand. Depending on the oxidative conditions of tissues and cells, and in addition to its ability to bind oxygen, it also has a nitrite reductase activity whereby it regulates the production of bioactive nitric oxide. Under stress conditions, like hypoxia and anoxia, it also protects cells against reactive oxygen species thanks to its pseudoperoxidase activity. The sequence is that of Myoglobin (mb) from Auxis rochei (Bullet tuna).